The primary structure comprises 143 residues: Transcriptional regulator MraZ (143 aa).

SpoVT-AbrB domains lie at 5–47 (EYNH…SSDE) and 76–119 (ASEC…SNVE).

It belongs to the MraZ family. Forms oligomers.

The protein localises to the cytoplasm. The protein resides in the nucleoid. This chain is Transcriptional regulator MraZ, found in Alkaliphilus oremlandii (strain OhILAs) (Clostridium oremlandii (strain OhILAs)).